Consider the following 639-residue polypeptide: Actin assembly-inducing protein (639 aa).

The first 29 residues, 1 to 29, serve as a signal peptide directing secretion; the sequence is MGLNRFMRAMMVVFITANCITINPDIIFA. Disordered stretches follow at residues 36-71, 132-212, 285-308, and 320-341; these read SSLNTDEWEEEKTEEQPSEVNTGPRYETAREVSSRD, RRHP…QPFF, LGFNAPATSEPSSFEFPPPPTDEE, and LGFNAPATSEPSSFEFPPPPTE. The span at 41 to 52 shows a compositional bias: acidic residues; the sequence is DEWEEEKTEEQP. Over residues 62–71 the composition is skewed to basic and acidic residues; the sequence is ETAREVSSRD. Positions 190–210 are enriched in polar residues; sequence DSSMQSADESSPQPLKANQQP. 2 repeat units span residues 264–298 and 299–333. Residues 264–333 are 5 X approximate tandem repeats, Pro-rich; it reads DFPPPPTDEE…APATSEPSSF (70 aa). One copy of the 3; approximate repeat lies at 334 to 378; the sequence is EFPPPPTEDELEIIRETASSLDSSFTRGDLASLRNAINRHSQNFS. A Cell attachment site motif is present at residues 360 to 362; the sequence is RGD. 2 disordered regions span residues 372–459 and 474–610; these read RHSQ…LSPK and KKTP…EPGN. A 4; approximate repeat occupies 379–417; it reads DFPPIPTEEELNGRGGRPTSEEFSSLNSGDFTDDENSET. Positions 409–422 are enriched in acidic residues; that stretch reads FTDDENSETTEEEI. A 5; truncated repeat occupies 418–422; it reads TEEEI. The segment covering 423-433 has biased composition (basic and acidic residues); the sequence is DRLADLRDRGT. 2 stretches are compositionally biased toward low complexity: residues 450–459 and 490–509; these read SSPVPSLSPK and KKTTTKTVTKKPTPVKTAPK. Composition is skewed to basic and acidic residues over residues 553–572 and 588–609; these read EATESDKEEMKPQTEEKMVE and GIEEGKLIAKSAEDEKAKEEPG. A helical transmembrane segment spans residues 613-633; the sequence is TLILAMLAIGVFSLGAFIKII.

Its subcellular location is the cell membrane. Functionally, virulence factor required for host cell microfilament interaction. It induces actin assembly around the bacteria to allow it to move within the cytoplasm. It is involved in the actin polymerization process. It seems to act as a nucleator that induces the reorganization of the actin cytoskeleton. This is Actin assembly-inducing protein (actA) from Listeria monocytogenes serovar 1/2a (strain ATCC BAA-679 / EGD-e).